Here is a 130-residue protein sequence, read N- to C-terminus: MAQVQYYGTGRRKSSVARVRLVPGEGRVIINGRDFENYIPFAALREVVKQPLVATETLGNYDVLVNVNGGGYTGQAGAIRHGIARALLKADPEYRLTLKRAGLLTRDARMKERKKYGLKGARRAPQFSKR.

The protein belongs to the universal ribosomal protein uS9 family.

This chain is Small ribosomal subunit protein uS9, found in Bacillus cytotoxicus (strain DSM 22905 / CIP 110041 / 391-98 / NVH 391-98).